We begin with the raw amino-acid sequence, 123 residues long: Small ribosomal subunit protein uS12 (123 aa).

A disordered region spans residues 9-28 (RNGRKRATKKTTTPALKGAP). Over residues 18–27 (KTTTPALKGA) the composition is skewed to low complexity. At Asp89 the chain carries 3-methylthioaspartic acid.

Belongs to the universal ribosomal protein uS12 family. As to quaternary structure, part of the 30S ribosomal subunit. Contacts proteins S8 and S17. May interact with IF1 in the 30S initiation complex.

In terms of biological role, with S4 and S5 plays an important role in translational accuracy. Functionally, interacts with and stabilizes bases of the 16S rRNA that are involved in tRNA selection in the A site and with the mRNA backbone. Located at the interface of the 30S and 50S subunits, it traverses the body of the 30S subunit contacting proteins on the other side and probably holding the rRNA structure together. The combined cluster of proteins S8, S12 and S17 appears to hold together the shoulder and platform of the 30S subunit. The polypeptide is Small ribosomal subunit protein uS12 (Desulfosudis oleivorans (strain DSM 6200 / JCM 39069 / Hxd3) (Desulfococcus oleovorans)).